Consider the following 176-residue polypeptide: Large ribosomal subunit protein uL22 (176 aa).

Positions 113-176 (VVESRPSKDQ…ETSEAKGGSD (64 aa)) are disordered. Residues 136 to 152 (SKAAATAPAKKSSASKA) show a composition bias toward low complexity. Basic and acidic residues predominate over residues 159–176 (TKAESKTSETSEAKGGSD).

The protein belongs to the universal ribosomal protein uL22 family. As to quaternary structure, part of the 50S ribosomal subunit.

Its function is as follows. This protein binds specifically to 23S rRNA; its binding is stimulated by other ribosomal proteins, e.g. L4, L17, and L20. It is important during the early stages of 50S assembly. It makes multiple contacts with different domains of the 23S rRNA in the assembled 50S subunit and ribosome. Functionally, the globular domain of the protein is located near the polypeptide exit tunnel on the outside of the subunit, while an extended beta-hairpin is found that lines the wall of the exit tunnel in the center of the 70S ribosome. This Mycobacterium marinum (strain ATCC BAA-535 / M) protein is Large ribosomal subunit protein uL22.